The primary structure comprises 359 residues: 3-dehydroquinate synthase (359 aa).

Residues Asp-71–Lys-76, Gly-105–Asp-109, Thr-129–Thr-130, Lys-142, and Lys-151 each bind NAD(+). Positions 184, 247, and 264 each coordinate Zn(2+).

This sequence belongs to the sugar phosphate cyclases superfamily. Dehydroquinate synthase family. Co(2+) is required as a cofactor. It depends on Zn(2+) as a cofactor. Requires NAD(+) as cofactor.

It is found in the cytoplasm. It catalyses the reaction 7-phospho-2-dehydro-3-deoxy-D-arabino-heptonate = 3-dehydroquinate + phosphate. It functions in the pathway metabolic intermediate biosynthesis; chorismate biosynthesis; chorismate from D-erythrose 4-phosphate and phosphoenolpyruvate: step 2/7. Its function is as follows. Catalyzes the conversion of 3-deoxy-D-arabino-heptulosonate 7-phosphate (DAHP) to dehydroquinate (DHQ). The sequence is that of 3-dehydroquinate synthase from Burkholderia lata (strain ATCC 17760 / DSM 23089 / LMG 22485 / NCIMB 9086 / R18194 / 383).